Here is a 400-residue protein sequence, read N- to C-terminus: Argininosuccinate synthase (400 aa).

ATP is bound by residues 11 to 19 (AYSGGLDTS) and A38. L-citrulline contacts are provided by Y89 and S94. G119 is a binding site for ATP. L-aspartate-binding residues include T121, N125, and D126. N125 contributes to the L-citrulline binding site. 5 residues coordinate L-citrulline: R129, S178, S187, E263, and Y275.

This sequence belongs to the argininosuccinate synthase family. Type 1 subfamily. Homotetramer.

The protein resides in the cytoplasm. The enzyme catalyses L-citrulline + L-aspartate + ATP = 2-(N(omega)-L-arginino)succinate + AMP + diphosphate + H(+). Its pathway is amino-acid biosynthesis; L-arginine biosynthesis; L-arginine from L-ornithine and carbamoyl phosphate: step 2/3. This chain is Argininosuccinate synthase, found in Desulfatibacillum aliphaticivorans.